Here is a 134-residue protein sequence, read N- to C-terminus: Small ribosomal subunit protein uS8c (134 aa).

The protein belongs to the universal ribosomal protein uS8 family. As to quaternary structure, part of the 30S ribosomal subunit.

The protein localises to the plastid. The protein resides in the chloroplast. In terms of biological role, one of the primary rRNA binding proteins, it binds directly to 16S rRNA central domain where it helps coordinate assembly of the platform of the 30S subunit. This Lactuca sativa (Garden lettuce) protein is Small ribosomal subunit protein uS8c (rps8).